The sequence spans 105 residues: Keratin-associated protein 17-1 (105 aa).

In terms of assembly, interacts with hair keratins.

Its function is as follows. In the hair cortex, hair keratin intermediate filaments are embedded in an interfilamentous matrix, consisting of hair keratin-associated proteins (KRTAP), which are essential for the formation of a rigid and resistant hair shaft through their extensive disulfide bond cross-linking with abundant cysteine residues of hair keratins. The matrix proteins include the high-sulfur and high-glycine-tyrosine keratins. The chain is Keratin-associated protein 17-1 (KRTAP17-1) from Homo sapiens (Human).